A 219-amino-acid chain; its full sequence is Large ribosomal subunit protein bL25 (219 aa).

Residues 176 to 219 form a disordered region; it reads VTVVPPTDEPSEEEVEAMEGESATEEPEVVDEDKEDDEEENKED. Over residues 184–219 the composition is skewed to acidic residues; the sequence is EPSEEEVEAMEGESATEEPEVVDEDKEDDEEENKED.

It belongs to the bacterial ribosomal protein bL25 family. CTC subfamily. As to quaternary structure, part of the 50S ribosomal subunit; part of the 5S rRNA/L5/L18/L25 subcomplex. Contacts the 5S rRNA. Binds to the 5S rRNA independently of L5 and L18.

Functionally, this is one of the proteins that binds to the 5S RNA in the ribosome where it forms part of the central protuberance. The protein is Large ribosomal subunit protein bL25 of Staphylococcus epidermidis (strain ATCC 12228 / FDA PCI 1200).